The primary structure comprises 196 residues: Putative acetyltransferase YJL218W (196 aa).

Asparagine 84 provides a ligand contact to acetyl-CoA. Residue histidine 114 is the Proton donor/acceptor of the active site. Residues glycine 141, alanine 159, isoleucine 164–arginine 165, lysine 179, and arginine 182 contribute to the acetyl-CoA site.

Belongs to the transferase hexapeptide repeat family. Homodimer.

This Saccharomyces cerevisiae (strain ATCC 204508 / S288c) (Baker's yeast) protein is Putative acetyltransferase YJL218W.